Reading from the N-terminus, the 344-residue chain is Mitochondrial mRNA pseudouridine synthase RPUSD3 (344 aa).

The transit peptide at 1 to 41 directs the protein to the mitochondrion; that stretch reads MGGWRVLGQASGGWRRGLGIRATSTAAGFGTKARHQLQRRG. The segment at 29 to 59 is disordered; the sequence is FGTKARHQLQRRGASKPSDPPGDQPFPGLLR. A compositionally biased stretch (basic residues) spans 32 to 42; sequence KARHQLQRRGA. Residue Ser64 is modified to Phosphoserine.

This sequence belongs to the pseudouridine synthase RluA family. Forms a regulatory protein-RNA complex, consisting of RCC1L, NGRN, RPUSD3, RPUSD4, TRUB2, FASTKD2 and 16S mt-rRNA.

It localises to the mitochondrion matrix. It carries out the reaction a uridine in mRNA = a pseudouridine in mRNA. Its function is as follows. Catalyzes uridine to pseudouridine isomerization (pseudouridylation) of specific mitochondrial mRNAs (mt-mRNAs), a post-transcriptional modification necessary for their translation. Acts at position 390 in COXI mt-mRNA and at position 697-699 in mitochondrial COXIII mt-mRNA. As a component of a functional protein-RNA module, consisting of RCC1L, NGRN, RPUSD3, RPUSD4, TRUB2, FASTKD2 and 16S mitochondrial ribosomal RNA (16S mt-rRNA), controls 16S mt-rRNA abundance and may play a role in mitochondrial ribosome biogenesis. The sequence is that of Mitochondrial mRNA pseudouridine synthase RPUSD3 (RPUSD3) from Bos taurus (Bovine).